The following is a 332-amino-acid chain: 2,3-diketo-L-gulonate reductase (332 aa).

Catalysis depends on H44, which acts as the Proton donor. Residues 168-174 (ITMVDMS), 224-225 (WK), and 304-306 (GHE) each bind NAD(+).

Belongs to the LDH2/MDH2 oxidoreductase family. DlgD subfamily. As to quaternary structure, homodimer.

The protein localises to the cytoplasm. The catalysed reaction is 3-dehydro-L-gulonate + NAD(+) = 2,3-dioxo-L-gulonate + NADH + H(+). The enzyme catalyses 3-dehydro-L-gulonate + NADP(+) = 2,3-dioxo-L-gulonate + NADPH + H(+). Catalyzes the reduction of 2,3-diketo-L-gulonate in the presence of NADH, to form 3-keto-L-gulonate. The chain is 2,3-diketo-L-gulonate reductase from Escherichia coli O8 (strain IAI1).